Consider the following 282-residue polypeptide: Sulfur carrier protein FdhD (282 aa).

The active-site Cysteine persulfide intermediate is Cys-115.

It belongs to the FdhD family.

It is found in the cytoplasm. Its function is as follows. Required for formate dehydrogenase (FDH) activity. Acts as a sulfur carrier protein that transfers sulfur from IscS to the molybdenum cofactor prior to its insertion into FDH. This Streptomyces avermitilis (strain ATCC 31267 / DSM 46492 / JCM 5070 / NBRC 14893 / NCIMB 12804 / NRRL 8165 / MA-4680) protein is Sulfur carrier protein FdhD.